The following is a 452-amino-acid chain: Ketoisovalerate reductase BEA2 (452 aa).

70-75 provides a ligand contact to NADP(+); sequence GPGNIG. Catalysis depends on K285, which acts as the Proton donor. The substrate site is built by N289, N293, and S393. E405 is a binding site for NADP(+).

Belongs to the ketopantoate reductase family.

It carries out the reaction (R)-2-hydroxy-3-methylbutanoate + NADP(+) = 3-methyl-2-oxobutanoate + NADPH + H(+). Its function is as follows. Ketoisovalerate reductase; part of the gene cluster that mediates the biosynthesis of beauvericin (BEA), a non-ribosomal cyclic hexadepsipeptide that shows antibiotic, antifungal, insecticidal, and cancer cell antiproliferative and antihaptotactic activity. Ketoisovalerate reductase BEA2 catalyzes the NADPH-specific reduction of ketoisovaleric acid to hydroxyisovalerate, a precursor for beauvericin biosynthesis. The nonribosomal cyclodepsipeptide synthetase BEA1 then catalyzes the formation of beauvericin via condensation and cyclization of 3 dipeptidol monomers, each composed of one unit of hydroxyisovalerate and one unit of N-methyl-phenylalanine. The protein is Ketoisovalerate reductase BEA2 of Gibberella fujikuroi (strain CBS 195.34 / IMI 58289 / NRRL A-6831) (Bakanae and foot rot disease fungus).